A 98-amino-acid chain; its full sequence is MTRSKRRLILKFNMISFFSAVSLLHYFLPSRKSISMFKKVFVSHAKAPRVDFSRRAGLAARRMEEKRKDATNLWFILYKVLICIYTYSISISLHTPCV.

2 consecutive transmembrane segments (helical) span residues 8–28 and 73–93; these read LILK…HYFL and LWFI…SISL.

Its subcellular location is the membrane. This is an uncharacterized protein from Saccharomyces cerevisiae (strain ATCC 204508 / S288c) (Baker's yeast).